Here is a 439-residue protein sequence, read N- to C-terminus: Agnestins biosynthesis cluster transcriptional coactivator AgnL9 (439 aa).

An HTH iclR-type domain is found at 79 to 149; it reads MTIQTQLLAC…EPGHITHSAL (71 aa). The H-T-H motif DNA-binding region spans 109–128; sequence MKDVSELIDVPENQLGRIVR.

The protein resides in the nucleus. Its function is as follows. Transcriptional coactivator; part of the gene cluster that mediates the biosynthesis of agnestins, dihydroxy-xanthone metabolites. The polypeptide is Agnestins biosynthesis cluster transcriptional coactivator AgnL9 (Paecilomyces divaricatus (Penicillium divaricatum)).